The chain runs to 117 residues: Large ribosomal subunit protein bL19 (117 aa).

The protein belongs to the bacterial ribosomal protein bL19 family.

Functionally, this protein is located at the 30S-50S ribosomal subunit interface and may play a role in the structure and function of the aminoacyl-tRNA binding site. This Halorhodospira halophila (strain DSM 244 / SL1) (Ectothiorhodospira halophila (strain DSM 244 / SL1)) protein is Large ribosomal subunit protein bL19.